The chain runs to 428 residues: Glutamate-1-semialdehyde 2,1-aminomutase (428 aa).

Lysine 265 is subject to N6-(pyridoxal phosphate)lysine.

This sequence belongs to the class-III pyridoxal-phosphate-dependent aminotransferase family. HemL subfamily. Homodimer. Requires pyridoxal 5'-phosphate as cofactor.

The protein resides in the cytoplasm. It catalyses the reaction (S)-4-amino-5-oxopentanoate = 5-aminolevulinate. It functions in the pathway porphyrin-containing compound metabolism; protoporphyrin-IX biosynthesis; 5-aminolevulinate from L-glutamyl-tRNA(Glu): step 2/2. The protein is Glutamate-1-semialdehyde 2,1-aminomutase of Shewanella frigidimarina (strain NCIMB 400).